We begin with the raw amino-acid sequence, 482 residues long: tRNA(Ile)-lysidine synthase (482 aa).

ATP is bound at residue 28 to 33 (SGGPDS).

This sequence belongs to the tRNA(Ile)-lysidine synthase family.

The protein resides in the cytoplasm. It carries out the reaction cytidine(34) in tRNA(Ile2) + L-lysine + ATP = lysidine(34) in tRNA(Ile2) + AMP + diphosphate + H(+). In terms of biological role, ligates lysine onto the cytidine present at position 34 of the AUA codon-specific tRNA(Ile) that contains the anticodon CAU, in an ATP-dependent manner. Cytidine is converted to lysidine, thus changing the amino acid specificity of the tRNA from methionine to isoleucine. The chain is tRNA(Ile)-lysidine synthase from Symbiobacterium thermophilum (strain DSM 24528 / JCM 14929 / IAM 14863 / T).